The chain runs to 264 residues: Thymidylate synthase (264 aa).

Position 21 (R21) interacts with dUMP. H51 serves as a coordination point for (6R)-5,10-methylene-5,6,7,8-tetrahydrofolate. Residue 126–127 (RR) participates in dUMP binding. C146 acts as the Nucleophile in catalysis. Residues 166 to 169 (RSAD), N177, and 207 to 209 (HLY) contribute to the dUMP site. D169 contributes to the (6R)-5,10-methylene-5,6,7,8-tetrahydrofolate binding site. A263 is a binding site for (6R)-5,10-methylene-5,6,7,8-tetrahydrofolate.

This sequence belongs to the thymidylate synthase family. Bacterial-type ThyA subfamily. Homodimer.

The protein localises to the cytoplasm. The catalysed reaction is dUMP + (6R)-5,10-methylene-5,6,7,8-tetrahydrofolate = 7,8-dihydrofolate + dTMP. It participates in pyrimidine metabolism; dTTP biosynthesis. Its function is as follows. Catalyzes the reductive methylation of 2'-deoxyuridine-5'-monophosphate (dUMP) to 2'-deoxythymidine-5'-monophosphate (dTMP) while utilizing 5,10-methylenetetrahydrofolate (mTHF) as the methyl donor and reductant in the reaction, yielding dihydrofolate (DHF) as a by-product. This enzymatic reaction provides an intracellular de novo source of dTMP, an essential precursor for DNA biosynthesis. The sequence is that of Thymidylate synthase from Methylobacterium nodulans (strain LMG 21967 / CNCM I-2342 / ORS 2060).